Reading from the N-terminus, the 131-residue chain is Synaptobrevin-like protein (131 aa).

Topologically, residues 1–81 are cytoplasmic; that stretch reads MLHITTMTDK…KRKFWWKNCK (81 aa). In terms of domain architecture, v-SNARE coiled-coil homology spans 18–78; that stretch reads RLQQTQAQVN…GKLKRKFWWK (61 aa). A helical; Anchor for type IV membrane protein transmembrane segment spans residues 82-102; it reads MLAVLGVLVVILIIVLIVWVV. The Vesicular portion of the chain corresponds to 103-131; sequence SEQKNKVEQSEHSSHHLVMDNSSHLLSEQ. A disordered region spans residues 112-131; that stretch reads SEHSSHHLVMDNSSHLLSEQ. The segment covering 122–131 has biased composition (polar residues); it reads DNSSHLLSEQ.

This sequence belongs to the synaptobrevin family.

The protein localises to the cytoplasmic vesicle. Its subcellular location is the secretory vesicle. It localises to the synaptic vesicle membrane. The protein resides in the synapse. It is found in the synaptosome. Its function is as follows. Unknown, but synaptobrevins are presumed to be involved in targeting and fusion of synaptic vesicles with the presynaptic membrane as well as in neurotransmitter release. This chain is Synaptobrevin-like protein, found in Schistosoma mansoni (Blood fluke).